A 458-amino-acid polypeptide reads, in one-letter code: Protein adenylyltransferase FICD (458 aa).

Residues M1–R23 are Cytoplasmic-facing. Residues F24–L44 form a helical; Signal-anchor for type II membrane protein membrane-spanning segment. Over G45–P458 the chain is Lumenal. Position 79 is an O-AMP-serine; by autocatalysis (S79). Residue T80 is modified to O-AMP-threonine; by autocatalysis. TPR repeat units lie at residues A106–F139 and V140–H173. An O-AMP-threonine; by autocatalysis modification is found at T183. Residues T230–G235 carry the Inhibitory (S/T)XXXE(G/N) motif motif. E234 serves as a coordination point for ATP. N275 is a glycosylation site (N-linked (GlcNAc...) asparagine). The Fido domain occupies V285–K420. V316 to H319 is an ATP binding site. H363 is an active-site residue. ATP contacts are provided by residues D367–R374, Y399–Y400, and N407.

Belongs to the fic family. As to quaternary structure, homodimer. Interacts with HD. Mg(2+) serves as cofactor. Requires Mn(2+) as cofactor. In terms of processing, auto-AMPylated in vitro.

It is found in the endoplasmic reticulum membrane. The enzyme catalyses L-tyrosyl-[protein] + ATP = O-(5'-adenylyl)-L-tyrosyl-[protein] + diphosphate. The catalysed reaction is 3-O-(5'-adenylyl)-L-threonyl-[protein] + H2O = L-threonyl-[protein] + AMP + H(+). It catalyses the reaction L-threonyl-[protein] + ATP = 3-O-(5'-adenylyl)-L-threonyl-[protein] + diphosphate. The side chain of Glu-234 determines which of the two opposing activities (AMPylase or de-AMPylase) will take place. In response to endoplasmic reticulum stress, mediates de-AMPylase activity. Adenylyltransferase activity is inhibited by the inhibitory helix present at the N-terminus: Glu-234 binds ATP and competes with ATP-binding at Arg-374, thereby preventing adenylyltransferase activity. In unstressed cells, disengagement of Glu-234 promotes adenylyltransferase activity. Activation dissociates ATP-binding from Glu-234, allowing ordered binding of the entire ATP moiety with the alpha-phosphate in an orientation that is productive for accepting an incoming target hydroxyl side chain. Functionally, protein that can both mediate the addition of adenosine 5'-monophosphate (AMP) to specific residues of target proteins (AMPylation), and the removal of the same modification from target proteins (de-AMPylation), depending on the context. The side chain of Glu-231 determines which of the two opposing activities (AMPylase or de-AMPylase) will take place. Acts as a key regulator of the ERN1/IRE1-mediated unfolded protein response (UPR) by mediating AMPylation or de-AMPylation of HSPA5/BiP. In unstressed cells, acts as an adenylyltransferase by mediating AMPylation of HSPA5/BiP at 'Thr-518', thereby inactivating it. In response to endoplasmic reticulum stress, acts as a phosphodiesterase by mediating removal of ATP (de-AMPylation) from HSPA5/BiP at 'Thr-518', leading to restore HSPA5/BiP activity. Although it is able to AMPylate RhoA, Rac and Cdc42 Rho GTPases in vitro, Rho GTPases do not constitute physiological substrates. This chain is Protein adenylyltransferase FICD, found in Rattus norvegicus (Rat).